The sequence spans 156 residues: Succinate dehydrogenase assembly factor 2-B, mitochondrial (156 aa).

The transit peptide at 1 to 24 (MLRQFIISTVGRRQPLLMILQSRL) directs the protein to the mitochondrion.

It belongs to the SDHAF2 family. In terms of assembly, interacts with the flavoprotein subunit within the SDH catalytic dimer.

The protein localises to the mitochondrion matrix. Functionally, plays an essential role in the assembly of succinate dehydrogenase (SDH), an enzyme complex (also referred to as respiratory complex II) that is a component of both the tricarboxylic acid (TCA) cycle and the mitochondrial electron transport chain, and which couples the oxidation of succinate to fumarate with the reduction of ubiquinone (coenzyme Q) to ubiquinol. Required for flavinylation (covalent attachment of FAD) of the flavoprotein subunit of the SDH catalytic dimer. This chain is Succinate dehydrogenase assembly factor 2-B, mitochondrial, found in Drosophila yakuba (Fruit fly).